Here is a 130-residue protein sequence, read N- to C-terminus: Chaperone protein SycT (130 aa).

As to quaternary structure, binds to YopT.

Its function is as follows. Functions as a specific chaperone for YopT. The chain is Chaperone protein SycT (sycT) from Yersinia enterocolitica.